The following is a 299-amino-acid chain: Delta-9 desaturase-like 5 protein (299 aa).

2 consecutive transmembrane segments (helical) span residues 31 to 51 (ADII…LAPF) and 55 to 75 (WEAL…ITFS). Positions 77 to 82 (HRNLAH) match the Histidine box-1 motif. The Histidine box-2 signature appears at 114–118 (HRFHH). 2 consecutive transmembrane segments (helical) span residues 174–194 (IGFH…LPYL) and 199–219 (GVGG…CHIW). A Histidine box-3 motif is present at residues 246–250 (HNNHH).

This sequence belongs to the fatty acid desaturase type 1 family. The cofactor is Fe cation.

Its subcellular location is the endoplasmic reticulum membrane. It participates in lipid metabolism; polyunsaturated fatty acid biosynthesis. This is Delta-9 desaturase-like 5 protein from Arabidopsis thaliana (Mouse-ear cress).